We begin with the raw amino-acid sequence, 199 residues long: NAD(P)H dehydrogenase (quinone) (199 aa).

A Flavodoxin-like domain is found at 4-190; the sequence is MLVLYYSAYG…DDARFQGRRV (187 aa). Residues 10 to 15 and 78 to 80 each bind FMN; these read SAYGHM and TRY. Tyrosine 12 provides a ligand contact to NAD(+). Tryptophan 98 is a binding site for substrate. FMN-binding positions include 113–119 and histidine 134; that span reads STATQHG. Residues 158 to 181 are disordered; that stretch reads GAPYGMTTTADGDGSRQPSAQELD. A compositionally biased stretch (polar residues) spans 163–177; the sequence is MTTTADGDGSRQPSA.

Belongs to the WrbA family. FMN serves as cofactor.

It catalyses the reaction a quinone + NADH + H(+) = a quinol + NAD(+). The enzyme catalyses a quinone + NADPH + H(+) = a quinol + NADP(+). In Brucella ovis (strain ATCC 25840 / 63/290 / NCTC 10512), this protein is NAD(P)H dehydrogenase (quinone).